Here is a 284-residue protein sequence, read N- to C-terminus: NAD kinase (284 aa).

D60 (proton acceptor) is an active-site residue. Residues 60–61 (DG), 134–135 (NE), R145, K162, D164, 175–180 (TAYSFS), and Q234 contribute to the NAD(+) site.

It belongs to the NAD kinase family. Requires a divalent metal cation as cofactor.

The protein localises to the cytoplasm. It carries out the reaction NAD(+) + ATP = ADP + NADP(+) + H(+). Its function is as follows. Involved in the regulation of the intracellular balance of NAD and NADP, and is a key enzyme in the biosynthesis of NADP. Catalyzes specifically the phosphorylation on 2'-hydroxyl of the adenosine moiety of NAD to yield NADP. In Clostridium botulinum (strain Eklund 17B / Type B), this protein is NAD kinase.